Reading from the N-terminus, the 187-residue chain is UPF0301 protein WIGBR1650 (187 aa).

This sequence belongs to the UPF0301 (AlgH) family.

This is UPF0301 protein WIGBR1650 from Wigglesworthia glossinidia brevipalpis.